A 790-amino-acid chain; its full sequence is Phenylalanine--tRNA ligase beta subunit (790 aa).

One can recognise a tRNA-binding domain in the interval 39–147 (AKPFSGIVVG…ADAPVGVDVR (109 aa)). One can recognise a B5 domain in the interval 400–476 (PAKALVNLRH…RLYGYNKLPV (77 aa)). Mg(2+) contacts are provided by Asp454, Asp460, Glu463, and Glu464. Residues 696-789 (SRFPEIRRDL…LGNRFGASLR (94 aa)) form the FDX-ACB domain.

The protein belongs to the phenylalanyl-tRNA synthetase beta subunit family. Type 1 subfamily. As to quaternary structure, tetramer of two alpha and two beta subunits. Requires Mg(2+) as cofactor.

The protein localises to the cytoplasm. The enzyme catalyses tRNA(Phe) + L-phenylalanine + ATP = L-phenylalanyl-tRNA(Phe) + AMP + diphosphate + H(+). The chain is Phenylalanine--tRNA ligase beta subunit from Hahella chejuensis (strain KCTC 2396).